Here is a 71-residue protein sequence, read N- to C-terminus: Sperm-associated antigen 11A (71 aa).

Residues 1-19 (MIPRLLPFFASLLFAALLF) form the signal peptide. 3 disulfides stabilise this stretch: C32/C61, C39/C54, and C44/C62.

It belongs to the beta-defensin family.

Its subcellular location is the secreted. Functionally, has antimicrobial activity against E.coli. Plays a role in the defense response in the male reproductive tract, contributing to sperm maturation, storage and protection. This Mus musculus (Mouse) protein is Sperm-associated antigen 11A.